The sequence spans 659 residues: MSETLADSELIKLTLPNGDVRAYPKGVTGSEVAASIGKRLAEDALAIKFGGKLKDLAFPIQQDGAIEIVTFDSDEGKALYWHSSSHLMAQAIEELFPGTKFGAGPSIETGFYYDVASEHRFSEADLREIEARMLEISNRDLQIQREELSREAAIEYFKTRREDPFKVEILEDTLKDTPVVSIYHQGEFSDLCSGPHFSSTSKLKAVRLTSISGSFWRGDASRQQMQRIYGVSFPSEKLLKKHFSQIEEAKKRDHRKLGSELELFMISPEVGSGLPMWLPKGAILRNELESFLKDEQRRRGYLPVVTPHIGNIELYKTSGHYPYYSDSQFPPLTFTDELGKEEQYLLKPMNCPHHHQIYSSKPRSYRDLPIRLTEFGTVYRYEQSGELNGLIRVRGFTQDDSHIYCRQDQLVDEICKAIDLTQFVFKTLGFAEVQTRLSLRDPENTSKYSGNNEVWVQAEQDLKDAADKMQLNYFIGLGEASFYGPKIDFIVRDAIGRKWQLGTVQVDYVMPERFDLTYVGSDGQKHRPVVIHRAPFGSLERFIGILIENFAGNFPVWLSPVQVMVLPITDDFRDYAHSVLQKLLDAGIRAEIDERGEKVGKKIRDAEIKKIPYMFVVGEKEMAAASVAVRRHKEGDKGTMPLQEAIRLLQTDISTKKIS.

The TGS domain occupies 7 to 70; it reads DSELIKLTLP…QQDGAIEIVT (64 aa). Residues 253–555 form a catalytic region; that stretch reads DHRKLGSELE…LIENFAGNFP (303 aa). The Zn(2+) site is built by C351, H402, and H532.

Belongs to the class-II aminoacyl-tRNA synthetase family. In terms of assembly, homodimer. It depends on Zn(2+) as a cofactor.

The protein localises to the cytoplasm. The enzyme catalyses tRNA(Thr) + L-threonine + ATP = L-threonyl-tRNA(Thr) + AMP + diphosphate + H(+). Catalyzes the attachment of threonine to tRNA(Thr) in a two-step reaction: L-threonine is first activated by ATP to form Thr-AMP and then transferred to the acceptor end of tRNA(Thr). Also edits incorrectly charged L-seryl-tRNA(Thr). The sequence is that of Threonine--tRNA ligase from Chloroherpeton thalassium (strain ATCC 35110 / GB-78).